Here is a 107-residue protein sequence, read N- to C-terminus: Phosphoribosyl-ATP pyrophosphatase (107 aa).

The protein belongs to the PRA-PH family.

Its subcellular location is the cytoplasm. The catalysed reaction is 1-(5-phospho-beta-D-ribosyl)-ATP + H2O = 1-(5-phospho-beta-D-ribosyl)-5'-AMP + diphosphate + H(+). Its pathway is amino-acid biosynthesis; L-histidine biosynthesis; L-histidine from 5-phospho-alpha-D-ribose 1-diphosphate: step 2/9. The sequence is that of Phosphoribosyl-ATP pyrophosphatase from Bacillus cereus (strain Q1).